We begin with the raw amino-acid sequence, 511 residues long: MAYVLTETSAGYALLKASDKKIYKSSSLIQDLDSSDKVLKEFKIAAFSKFNSAANALEEANSIIEGKVSSQLEKLLEEIKKDKKSTLIVSETKLANAINKLGLNFNVVSDAVTLDIYRAIKEYLPELLPGMSDNDLSKMSLGLAHSIGRHKLKFSADKVDVMIIQAIALLDDLDKELNTYAMRCKEWYGWHFPELAKIVTDSVAYARIILTMGIRSKASETDLSEILPEEIEERVKTAAEVSMGTEITQTDLDNINALAEQIVEFAAYREQLSNYLSARMKAIAPNLTQLVGELVGARLIAHSGSLISLAKSPASTIQILGAEKALFRALKTKHDTPKYGLLYHASLVGQATGKNKGKIARVLAAKAAVSLRYDALAEDRDDSGDIGLESRAKVENRLSQLEGRDLRTTPKVVREAKKVEMTEARAYNADADTAKAASDSESDSDDEEEEKKEKKEKKRKRDDDEDSKDSKKAKKEKKDKKEKKEKKEKKEKKEKKEKKEKKSKKEKKEKK.

A Glycyl lysine isopeptide (Lys-Gly) (interchain with G-Cter in ubiquitin) cross-link involves residue lysine 281. The Nop domain maps to 283–403; that stretch reads IAPNLTQLVG…VENRLSQLEG (121 aa). The segment at 423–511 is disordered; sequence EARAYNADAD…KSKKEKKEKK (89 aa). Residues 435–511 adopt a coiled-coil conformation; sequence KAASDSESDS…KSKKEKKEKK (77 aa). The segment covering 440 to 450 has biased composition (acidic residues); that stretch reads SESDSDDEEEE. Residues 471–511 show a composition bias toward basic residues; that stretch reads KKAKKEKKDKKEKKEKKEKKEKKEKKEKKEKKSKKEKKEKK.

Belongs to the NOP5/NOP56 family. As to quaternary structure, interacts with SIK1/NOP56 and NOP1. Interacts with the trimethylguanosine synthase TGS1. Component of the ribosomal small subunit (SSU) processome composed of at least 40 protein subunits and snoRNA U3.

The protein localises to the nucleus. It localises to the nucleolus. Required for pre-18S rRNA processing. May bind microtubules. In Saccharomyces cerevisiae (strain ATCC 204508 / S288c) (Baker's yeast), this protein is Nucleolar protein 58 (NOP58).